A 527-amino-acid polypeptide reads, in one-letter code: Peptide chain release factor 3 (527 aa).

Positions 9–277 (AKRRTFAIIS…AVVDWAPKPL (269 aa)) constitute a tr-type G domain. GTP contacts are provided by residues 18–25 (SHPDAGKT), 86–90 (DTPGH), and 140–143 (NKLD).

Belongs to the TRAFAC class translation factor GTPase superfamily. Classic translation factor GTPase family. PrfC subfamily.

The protein resides in the cytoplasm. In terms of biological role, increases the formation of ribosomal termination complexes and stimulates activities of RF-1 and RF-2. It binds guanine nucleotides and has strong preference for UGA stop codons. It may interact directly with the ribosome. The stimulation of RF-1 and RF-2 is significantly reduced by GTP and GDP, but not by GMP. The polypeptide is Peptide chain release factor 3 (Stutzerimonas stutzeri (strain A1501) (Pseudomonas stutzeri)).